The sequence spans 259 residues: Hydroxyethylthiazole kinase (259 aa).

Methionine 37 contacts substrate. ATP is bound by residues arginine 113 and threonine 158. Glycine 185 contacts substrate.

The protein belongs to the Thz kinase family. Mg(2+) serves as cofactor.

The catalysed reaction is 5-(2-hydroxyethyl)-4-methylthiazole + ATP = 4-methyl-5-(2-phosphooxyethyl)-thiazole + ADP + H(+). It functions in the pathway cofactor biosynthesis; thiamine diphosphate biosynthesis; 4-methyl-5-(2-phosphoethyl)-thiazole from 5-(2-hydroxyethyl)-4-methylthiazole: step 1/1. Functionally, catalyzes the phosphorylation of the hydroxyl group of 4-methyl-5-beta-hydroxyethylthiazole (THZ). This chain is Hydroxyethylthiazole kinase, found in Helicobacter pylori (strain ATCC 700392 / 26695) (Campylobacter pylori).